Here is a 2513-residue protein sequence, read N- to C-terminus: Probable polyketide synthase 7 (2513 aa).

Residues 11–441 (EKGVAIVGIG…GSNCCLLISE (431 aa)) enclose the Ketosynthase family 3 (KS3) domain. Active-site for beta-ketoacyl synthase activity residues include Cys-181, His-323, and His-362. Positions 632–665 (GVNPSFILGHSLGEISASYCSGMIDLDTFCYTVY) are acyl/malonyl transferase. The active-site For acyl/malonyl transferase activity is Ser-642. An N-terminal hotdog fold region spans residues 922–1044 (IDHLGISNSF…SNFQLLDHGN (123 aa)). One can recognise a PKS/mFAS DH domain in the interval 922–1206 (IDHLGISNSF…CKSLIPIKDS (285 aa)). The Proton acceptor; for dehydratase activity role is filled by His-956. The interval 1061-1206 (NLSKLTKNEL…CKSLIPIKDS (146 aa)) is C-terminal hotdog fold. The active-site Proton donor; for dehydratase activity is the Asp-1119. The Carrier domain occupies 2426–2503 (IGNKNIDELF…ISIKMILNSL (78 aa)). O-(pantetheine 4'-phosphoryl)serine is present on Ser-2463.

Requires pantetheine 4'-phosphate as cofactor.

Its function is as follows. Probable polyketide synthase. This Dictyostelium discoideum (Social amoeba) protein is Probable polyketide synthase 7 (pks7).